Consider the following 806-residue polypeptide: ATP-dependent zinc metalloprotease FTSH 11, chloroplastic/mitochondrial (806 aa).

Residues 1 to 63 (MSSSTLQASL…RFRPLPCSLR (63 aa)) constitute a chloroplast and mitochondrion transit peptide. A compositionally biased stretch (basic and acidic residues) spans 106–116 (FVGGEETKSGG). The disordered stretch occupies residues 106 to 130 (FVGGEETKSGGEEAEVSNGVTEGKE). Residues 301 to 321 (LVSTILFTVAVGLVWIMGAAA) form a helical membrane-spanning segment. Position 402–409 (402–409 (GAPGTGKT)) interacts with ATP. H620 is a Zn(2+) binding site. E621 is a catalytic residue. The Zn(2+) site is built by H624 and D698.

The protein in the N-terminal section; belongs to the AAA ATPase family. This sequence in the C-terminal section; belongs to the peptidase M41 family. In terms of assembly, homooligomer. Requires Zn(2+) as cofactor.

The protein resides in the mitochondrion inner membrane. The protein localises to the plastid. It is found in the chloroplast thylakoid membrane. Its function is as follows. Probable ATP-dependent zinc metallopeptidase. Involved in the assembly and/or stability of the complexes I and V. Involved in thermotolerance but not in high light stress resistance or in the assembly/stability of the complexes I and V of the mitochondrial oxidative phosphorylation system. The polypeptide is ATP-dependent zinc metalloprotease FTSH 11, chloroplastic/mitochondrial (FTSH11) (Arabidopsis thaliana (Mouse-ear cress)).